We begin with the raw amino-acid sequence, 238 residues long: Probable transcriptional regulatory protein Mmwyl1_2868 (238 aa).

The protein belongs to the TACO1 family.

It localises to the cytoplasm. The polypeptide is Probable transcriptional regulatory protein Mmwyl1_2868 (Marinomonas sp. (strain MWYL1)).